Reading from the N-terminus, the 160-residue chain is MSKHPMTVEGAEALKEELHRLKFVDRPRIVEAIATARAHGDLKENAEYHAAREQQSFNEGRIQELEAKLSHAQIIDISKLPNNGKVIFGSTVTICHVATGSELTYKIVGEDEADIKLNKISYSSPIARALIGKELDDAVTVETPGGMVEYEIIQVQYIVE.

The stretch at 50-70 forms a coiled coil; that stretch reads AAREQQSFNEGRIQELEAKLS.

Belongs to the GreA/GreB family.

Functionally, necessary for efficient RNA polymerase transcription elongation past template-encoded arresting sites. The arresting sites in DNA have the property of trapping a certain fraction of elongating RNA polymerases that pass through, resulting in locked ternary complexes. Cleavage of the nascent transcript by cleavage factors such as GreA or GreB allows the resumption of elongation from the new 3'terminus. GreA releases sequences of 2 to 3 nucleotides. The polypeptide is Transcription elongation factor GreA (Legionella pneumophila (strain Corby)).